The following is a 1036-amino-acid chain: MTMGDMKTPDFDDLLAAFDIPDMVDPKAAIESGHDDHESHIKQNAHVDDDSHTPSSSDVGVSVIVKNVRNIDSSEGVEKDGHNPTGNGLHNGFLTASSLDSYGKDGAKSLKGDTPASEVTLKDPAFSQFSPISSAEEFEDDEKIEVDDPPDKEEARAGFRSNVLTGSAPQQDFDKLKALGGENSSKTGVSTSGHTDKNKVKREAESNSITLSVYEPFKVRKAEDKLKENSEKMLESRVLDGKPSSEKSDSGIAAAASSKTKPSSKLSSCIAAIAALSAKKAASDSCKEPVANSREASPLPKEVNDSPKAADKSPESQNLIDGTKKASLKPSDSPRSVSSENSSKGSPSSPVGSTPAIPKVRIKTIKTSSGEIKRTVTRVLPEVDLDSGKKPSEQAASVMASVTSLLSSSASATVLSSPPRAPLQTAMVTSAVSSAELTPKQVTIKPVATAFLPVSAVKTAGSQVINLKLANNTTVKATVISAASVQSASSAIIKAANAIQQQTVVVPASSLANAKLVPKTVHLANLNLLPQGAQATSELRQVLTKPQQQIKQAIINAAASQPPKKVSRVQVVSSLQSSVVEAFNKVLSSVNPVPVYTPNLSPPANAGITLPMRGYKCLECGDAFALEKSLSQHYDRRSVRIEVTCNHCTKNLVFYNKCSLLSHARGHKEKGVVMQCSHLILKPVPADQMIVPPSSNTAASTLQSSVGAATHTVPKVQPGIAGAVISAPASTPMSPAMPLDEDPSKLCRHSLKCLECNEVFQDEPSLATHFQHAADTSGQQMKKHPCRQCDKSFSSSHSLCRHNRIKHKGIRKVYACSHCPDSRRTFTKRLMLERHIQLMHGIKDPDVKELSDDAGDVTNDEEEEAEIKEDAKVPSPKRKLEEPVLEFRPPRGAITQPLKKLKINVFKVHKCAVCGFTTENLLQFHEHIPQHRSDGSSHQCRECGLCYTSHGSLARHLFIVHKLKEPQPVSKQNGAGEDSQQENKPSPEDEAAEGAASDRKCKVCAKTFETEAALNTHMRTHGMAFIKSKRMSSAEK.

Disordered stretches follow at residues 26–92 (PKAA…LHNG), 106–206 (GAKS…EAES), 220–265 (RKAE…PSSK), and 281–362 (AASD…KVRI). Over residues 32–52 (SGHDDHESHIKQNAHVDDDSH) the composition is skewed to basic and acidic residues. Phosphoserine occurs at positions 130, 133, and 134. Over residues 136 to 151 (EEFEDDEKIEVDDPPD) the composition is skewed to acidic residues. Residue K175 is modified to N6-acetyllysine. A compositionally biased stretch (polar residues) spans 182–193 (ENSSKTGVSTSG). 2 stretches are compositionally biased toward basic and acidic residues: residues 194-205 (HTDKNKVKREAE) and 220-249 (RKAE…EKSD). Over residues 253 to 265 (AAAASSKTKPSSK) the composition is skewed to low complexity. Positions 302–314 (EVNDSPKAADKSP) are enriched in basic and acidic residues. 2 positions are modified to phosphoserine: S306 and S313. A compositionally biased stretch (low complexity) spans 336 to 353 (SVSSENSSKGSPSSPVGS). S433 carries the phosphoserine modification. Residues K458 and K515 each participate in a glycyl lysine isopeptide (Lys-Gly) (interchain with G-Cter in SUMO2) cross-link. The C2H2-type 1; degenerate zinc-finger motif lies at 615-634 (YKCLECGDAFALEKSLSQHY). A C2H2-type 2; degenerate zinc finger spans residues 751–775 (LKCLECNEVFQDEPSLATHFQHAAD). A C2H2-type 3 zinc finger spans residues 784–807 (HPCRQCDKSFSSSHSLCRHNRIKH). The segment at 814 to 840 (YACSHCPDSRRTFTKRLMLERHIQLMH) adopts a C2H2-type 4; degenerate zinc-finger fold. Positions 847-877 (VKELSDDAGDVTNDEEEEAEIKEDAKVPSPK) are disordered. The span at 852 to 867 (DDAGDVTNDEEEEAEI) shows a compositional bias: acidic residues. The segment covering 868-877 (KEDAKVPSPK) has biased composition (basic and acidic residues). Residue S875 is modified to Phosphoserine. Residues K879 and K902 each participate in a glycyl lysine isopeptide (Lys-Gly) (interchain with G-Cter in SUMO2) cross-link. C2H2-type zinc fingers lie at residues 938 to 961 (HQCR…FIVH) and 999 to 1021 (RKCK…MRTH). Positions 966–1000 (PQPVSKQNGAGEDSQQENKPSPEDEAAEGAASDRK) are disordered.

This sequence belongs to the krueppel C2H2-type zinc-finger protein family.

It is found in the nucleus. In terms of biological role, may be involved in transcriptional regulation. In Mus musculus (Mouse), this protein is Zinc finger protein 532 (Znf532).